Reading from the N-terminus, the 40-residue chain is Photosystem II reaction center protein J (40 aa).

The helical transmembrane segment at 8 to 28 (IPLWLVGTVTGTLVIGLMGIF) threads the bilayer.

It belongs to the PsbJ family. In terms of assembly, PSII is composed of 1 copy each of membrane proteins PsbA, PsbB, PsbC, PsbD, PsbE, PsbF, PsbH, PsbI, PsbJ, PsbK, PsbL, PsbM, PsbT, PsbX, PsbY, PsbZ, Psb30/Ycf12, at least 3 peripheral proteins of the oxygen-evolving complex and a large number of cofactors. It forms dimeric complexes.

The protein resides in the plastid. The protein localises to the chloroplast thylakoid membrane. One of the components of the core complex of photosystem II (PSII). PSII is a light-driven water:plastoquinone oxidoreductase that uses light energy to abstract electrons from H(2)O, generating O(2) and a proton gradient subsequently used for ATP formation. It consists of a core antenna complex that captures photons, and an electron transfer chain that converts photonic excitation into a charge separation. The polypeptide is Photosystem II reaction center protein J (Psilotum nudum (Whisk fern)).